The sequence spans 151 residues: MELDIKGIMDRLPHRYPMLLIDRVLEMVPGKSIVAIKNVSINEPFFTGHFPHHPVMPGVLIVEAMAQASALFSFTDENGGLKCDGAKTAYYLVGIDGARFRKPVVPGDQLRLEVEAERLSCTICKYQGRALVDGQLVAEAKLMCAIRSLEE.

His49 is a catalytic residue.

Belongs to the thioester dehydratase family. FabZ subfamily.

It is found in the cytoplasm. The enzyme catalyses a (3R)-hydroxyacyl-[ACP] = a (2E)-enoyl-[ACP] + H2O. Functionally, involved in unsaturated fatty acids biosynthesis. Catalyzes the dehydration of short chain beta-hydroxyacyl-ACPs and long chain saturated and unsaturated beta-hydroxyacyl-ACPs. The protein is 3-hydroxyacyl-[acyl-carrier-protein] dehydratase FabZ of Bordetella parapertussis (strain 12822 / ATCC BAA-587 / NCTC 13253).